The primary structure comprises 140 residues: Truncated tyrosine phosphatase D1 (140 aa).

The Tyrosine-protein phosphatase domain occupies 1 to 140; sequence MRRPNCIAEI…SAQWIQFLKK (140 aa).

This sequence belongs to the protein-tyrosine phosphatase family.

The protein is Truncated tyrosine phosphatase D1 (D1) of Microplitis demolitor bracovirus (isolate Webb) (MdBV).